A 608-amino-acid chain; its full sequence is Elongation factor 4 (608 aa).

One can recognise a tr-type G domain in the interval 11 to 193 (DRIRNFSIIA…QIVQKIPAPS (183 aa)). Residues 23 to 28 (DHGKST) and 140 to 143 (NKID) contribute to the GTP site.

Belongs to the TRAFAC class translation factor GTPase superfamily. Classic translation factor GTPase family. LepA subfamily.

It is found in the cell membrane. It catalyses the reaction GTP + H2O = GDP + phosphate + H(+). Required for accurate and efficient protein synthesis under certain stress conditions. May act as a fidelity factor of the translation reaction, by catalyzing a one-codon backward translocation of tRNAs on improperly translocated ribosomes. Back-translocation proceeds from a post-translocation (POST) complex to a pre-translocation (PRE) complex, thus giving elongation factor G a second chance to translocate the tRNAs correctly. Binds to ribosomes in a GTP-dependent manner. The chain is Elongation factor 4 from Anoxybacillus flavithermus (strain DSM 21510 / WK1).